Here is a 547-residue protein sequence, read N- to C-terminus: Chaperonin GroEL (547 aa).

Residues 30 to 33, lysine 51, 87 to 91, glycine 415, and aspartate 495 contribute to the ATP site; these read TLGP and DGTTT.

Belongs to the chaperonin (HSP60) family. As to quaternary structure, forms a cylinder of 14 subunits composed of two heptameric rings stacked back-to-back. Interacts with the co-chaperonin GroES.

The protein resides in the cytoplasm. It carries out the reaction ATP + H2O + a folded polypeptide = ADP + phosphate + an unfolded polypeptide.. In terms of biological role, together with its co-chaperonin GroES, plays an essential role in assisting protein folding. The GroEL-GroES system forms a nano-cage that allows encapsulation of the non-native substrate proteins and provides a physical environment optimized to promote and accelerate protein folding. In Rhizobium leguminosarum bv. trifolii (strain WSM2304), this protein is Chaperonin GroEL.